We begin with the raw amino-acid sequence, 41 residues long: Large ribosomal subunit protein bL36 (41 aa).

Belongs to the bacterial ribosomal protein bL36 family.

This Orientia tsutsugamushi (strain Boryong) (Rickettsia tsutsugamushi) protein is Large ribosomal subunit protein bL36.